The following is a 184-amino-acid chain: Photosystem I assembly protein Ycf4 (184 aa).

A run of 2 helical transmembrane segments spans residues 22-42 (FCWA…GTSS) and 57-77 (IVFF…LFIS).

Belongs to the Ycf4 family.

Its subcellular location is the plastid. It is found in the chloroplast thylakoid membrane. Seems to be required for the assembly of the photosystem I complex. The chain is Photosystem I assembly protein Ycf4 from Helianthus annuus (Common sunflower).